Reading from the N-terminus, the 265-residue chain is Tryptophan synthase alpha chain (265 aa).

Residues glutamate 47 and aspartate 58 each act as proton acceptor in the active site.

The protein belongs to the TrpA family. As to quaternary structure, tetramer of two alpha and two beta chains.

The catalysed reaction is (1S,2R)-1-C-(indol-3-yl)glycerol 3-phosphate + L-serine = D-glyceraldehyde 3-phosphate + L-tryptophan + H2O. Its pathway is amino-acid biosynthesis; L-tryptophan biosynthesis; L-tryptophan from chorismate: step 5/5. Functionally, the alpha subunit is responsible for the aldol cleavage of indoleglycerol phosphate to indole and glyceraldehyde 3-phosphate. This is Tryptophan synthase alpha chain from Methanoregula boonei (strain DSM 21154 / JCM 14090 / 6A8).